The primary structure comprises 284 residues: Diaminopimelate epimerase (284 aa).

Residues Asn-14 and Asn-67 each contribute to the substrate site. The active-site Proton donor is the Cys-76. Substrate-binding positions include 77–78, Asn-166, Asn-199, and 217–218; these read GN and ER. Cys-226 serves as the catalytic Proton acceptor. Residue 227–228 coordinates substrate; it reads GT.

It belongs to the diaminopimelate epimerase family. In terms of assembly, homodimer.

Its subcellular location is the cytoplasm. It carries out the reaction (2S,6S)-2,6-diaminopimelate = meso-2,6-diaminopimelate. It participates in amino-acid biosynthesis; L-lysine biosynthesis via DAP pathway; DL-2,6-diaminopimelate from LL-2,6-diaminopimelate: step 1/1. Functionally, catalyzes the stereoinversion of LL-2,6-diaminopimelate (L,L-DAP) to meso-diaminopimelate (meso-DAP), a precursor of L-lysine and an essential component of the bacterial peptidoglycan. This Bacillus subtilis (strain 168) protein is Diaminopimelate epimerase.